Here is a 368-residue protein sequence, read N- to C-terminus: CCA-adding enzyme (368 aa).

Residues G8 and R11 each coordinate ATP. CTP is bound by residues G8 and R11. Mg(2+)-binding residues include D21 and D23. The ATP site is built by R91, R137, and R140. R91, R137, and R140 together coordinate CTP.

It belongs to the tRNA nucleotidyltransferase/poly(A) polymerase family. Bacterial CCA-adding enzyme type 2 subfamily. The cofactor is Mg(2+).

The enzyme catalyses a tRNA precursor + 2 CTP + ATP = a tRNA with a 3' CCA end + 3 diphosphate. The catalysed reaction is a tRNA with a 3' CCA end + 2 CTP + ATP = a tRNA with a 3' CCACCA end + 3 diphosphate. Functionally, catalyzes the addition and repair of the essential 3'-terminal CCA sequence in tRNAs without using a nucleic acid template. Adds these three nucleotides in the order of C, C, and A to the tRNA nucleotide-73, using CTP and ATP as substrates and producing inorganic pyrophosphate. tRNA 3'-terminal CCA addition is required both for tRNA processing and repair. Also involved in tRNA surveillance by mediating tandem CCA addition to generate a CCACCA at the 3' terminus of unstable tRNAs. While stable tRNAs receive only 3'-terminal CCA, unstable tRNAs are marked with CCACCA and rapidly degraded. This chain is CCA-adding enzyme, found in Pseudomonas putida (strain ATCC 700007 / DSM 6899 / JCM 31910 / BCRC 17059 / LMG 24140 / F1).